We begin with the raw amino-acid sequence, 941 residues long: Translation initiation factor IF-2 (941 aa).

2 disordered regions span residues 61–204 (IQSN…RREN) and 249–274 (QEKDKETKKAKKSNKPKAIPAAKNNK). Positions 147 to 163 (EKAKQKLQEIQKSREAL) are enriched in basic and acidic residues. Residues 164–179 (NKLTQSNTNNANNANS) are compositionally biased toward low complexity. The segment covering 180–204 (AKKEISEVAKQEREQEHLDNKRREN) has biased composition (basic and acidic residues). The tr-type G domain occupies 440–609 (ERPPVVTIMG…LIQADIMELK (170 aa)). A G1 region spans residues 449–456 (GHVDHGKT). 449–456 (GHVDHGKT) lines the GTP pocket. The G2 stretch occupies residues 474–478 (GITQH). The segment at 495–498 (DTPG) is G3. Residues 495-499 (DTPGH) and 549-552 (NKMD) each bind GTP. Residues 549-552 (NKMD) are G4. The tract at residues 585 to 587 (SAK) is G5.

The protein belongs to the TRAFAC class translation factor GTPase superfamily. Classic translation factor GTPase family. IF-2 subfamily.

Its subcellular location is the cytoplasm. Its function is as follows. One of the essential components for the initiation of protein synthesis. Protects formylmethionyl-tRNA from spontaneous hydrolysis and promotes its binding to the 30S ribosomal subunits. Also involved in the hydrolysis of GTP during the formation of the 70S ribosomal complex. The polypeptide is Translation initiation factor IF-2 (Helicobacter acinonychis (strain Sheeba)).